Consider the following 503-residue polypeptide: MTVRTRVAPSPTGDPHVGTAYIALFNLCFARKHGGQFILRIEDTDQSRSTPESEQAILDSLRWLGLEWDEGPDVGGAAGPYRQSERKEIYAQYVQQLLDAGHAFKCYRTTEELDMLRAARKEAGIHSALKQSDLMLTEQEQAEREAAGIPYVVRMKVPEEEGACQVTDLLRGNIDLDWSMVDAQILMKSDGMPTYHLANVVDDHLMKITHVIRGEEWINSAPKHILLYQYFGWDVPVFCHLPLLRNPDKTKLSKRKNPTSILYYKQAGYLPEALTNYLGRMGWSMPDESEKFSIQEMLNHFDIARVSLGGPVFDIEKLNWLNGLWIREDLDDAALAQRLVDWKFNQDNLLAVIPHVKQRMETLGDFLPMVSFLAANTLGITEESFKGNKLDLEDQKKVLQFALWQLDTMRTWERDDIFATLKGLADGMGIKLKDFLAPLFVAISGSTASFSVMDAMVLLGSDLSRARLRVAVEVLGGAGKKVLKRYEKEFAALSQLNEESDAE.

The 'HIGH' region motif lies at 9–19 (PSPTGDPHVGT). Positions 251-255 (KLSKR) match the 'KMSKS' region motif. Position 254 (K254) interacts with ATP.

This sequence belongs to the class-I aminoacyl-tRNA synthetase family. Glutamate--tRNA ligase type 1 subfamily. As to quaternary structure, monomer.

Its subcellular location is the cytoplasm. It carries out the reaction tRNA(Glu) + L-glutamate + ATP = L-glutamyl-tRNA(Glu) + AMP + diphosphate. Its function is as follows. Catalyzes the attachment of glutamate to tRNA(Glu) in a two-step reaction: glutamate is first activated by ATP to form Glu-AMP and then transferred to the acceptor end of tRNA(Glu). The protein is Glutamate--tRNA ligase of Saccharophagus degradans (strain 2-40 / ATCC 43961 / DSM 17024).